Consider the following 208-residue polypeptide: Putative thymidylate kinase (208 aa).

The segment at 12–19 is defective ATP-binding; that stretch reads GIDGTGTS.

It belongs to the thymidylate kinase family.

The catalysed reaction is dTMP + ATP = dTDP + ADP. In Treponema pallidum (strain Nichols), this protein is Putative thymidylate kinase (tmk).